Here is a 245-residue protein sequence, read N- to C-terminus: Thiopurine S-methyltransferase (245 aa).

29–40 (WREKWVDGKIGF) serves as a coordination point for S-adenosyl-L-methionine. Phe40 is a substrate binding site. Lys58 carries the post-translational modification N6-acetyllysine. Residues Leu69, Glu90, and Arg152 each coordinate S-adenosyl-L-methionine.

This sequence belongs to the class I-like SAM-binding methyltransferase superfamily. TPMT family. In terms of assembly, monomer.

The protein localises to the cytoplasm. The enzyme catalyses S-adenosyl-L-methionine + a thiopurine = S-adenosyl-L-homocysteine + a thiopurine S-methylether.. The protein is Thiopurine S-methyltransferase (TPMT) of Lynx rufus (Bobcat).